The primary structure comprises 988 residues: Bifunctional glutamine synthetase adenylyltransferase/adenylyl-removing enzyme (988 aa).

Positions 1 to 472 are adenylyl removase; sequence MTKRETVERR…RYSALFEQET (472 aa). The interval 476–988 is adenylyl transferase; it reads GEAGNLVFTG…AFVAVVKNGG (513 aa).

The protein belongs to the GlnE family. Requires Mg(2+) as cofactor.

It carries out the reaction [glutamine synthetase]-O(4)-(5'-adenylyl)-L-tyrosine + phosphate = [glutamine synthetase]-L-tyrosine + ADP. It catalyses the reaction [glutamine synthetase]-L-tyrosine + ATP = [glutamine synthetase]-O(4)-(5'-adenylyl)-L-tyrosine + diphosphate. Functionally, involved in the regulation of glutamine synthetase GlnA, a key enzyme in the process to assimilate ammonia. When cellular nitrogen levels are high, the C-terminal adenylyl transferase (AT) inactivates GlnA by covalent transfer of an adenylyl group from ATP to specific tyrosine residue of GlnA, thus reducing its activity. Conversely, when nitrogen levels are low, the N-terminal adenylyl removase (AR) activates GlnA by removing the adenylyl group by phosphorolysis, increasing its activity. The regulatory region of GlnE binds the signal transduction protein PII (GlnB) which indicates the nitrogen status of the cell. The chain is Bifunctional glutamine synthetase adenylyltransferase/adenylyl-removing enzyme from Agrobacterium fabrum (strain C58 / ATCC 33970) (Agrobacterium tumefaciens (strain C58)).